The primary structure comprises 495 residues: Trigger factor (495 aa).

Residues 169–254 (GDRVAMDYVG…VKDVAAPGAV (86 aa)) enclose the PPIase FKBP-type domain. The disordered stretch occupies residues 441 to 495 (LAEDEGEAKAETKKAAPKKKAAAKTEAAEAGEGEEAAAPKKKAAPKKKAADESAE).

This sequence belongs to the FKBP-type PPIase family. Tig subfamily.

It localises to the cytoplasm. It catalyses the reaction [protein]-peptidylproline (omega=180) = [protein]-peptidylproline (omega=0). Functionally, involved in protein export. Acts as a chaperone by maintaining the newly synthesized protein in an open conformation. Functions as a peptidyl-prolyl cis-trans isomerase. This is Trigger factor from Rhizobium etli (strain CIAT 652).